A 117-amino-acid chain; its full sequence is Large ribosomal subunit protein bL20 (117 aa).

This sequence belongs to the bacterial ribosomal protein bL20 family.

Functionally, binds directly to 23S ribosomal RNA and is necessary for the in vitro assembly process of the 50S ribosomal subunit. It is not involved in the protein synthesizing functions of that subunit. The polypeptide is Large ribosomal subunit protein bL20 (Rickettsia typhi (strain ATCC VR-144 / Wilmington)).